The sequence spans 236 residues: ATP synthase subunit a (236 aa).

Helical transmembrane passes span S18 to T38, G79 to V99, D112 to V132, I174 to G194, and W205 to Y227.

This sequence belongs to the ATPase A chain family. F-type ATPases have 2 components, CF(1) - the catalytic core - and CF(0) - the membrane proton channel. CF(1) has five subunits: alpha(3), beta(3), gamma(1), delta(1), epsilon(1). CF(0) has three main subunits: a(1), b(2) and c(9-12). The alpha and beta chains form an alternating ring which encloses part of the gamma chain. CF(1) is attached to CF(0) by a central stalk formed by the gamma and epsilon chains, while a peripheral stalk is formed by the delta and b chains.

It is found in the cell membrane. Key component of the proton channel; it plays a direct role in the translocation of protons across the membrane. The polypeptide is ATP synthase subunit a (Lysinibacillus sphaericus (strain C3-41)).